The primary structure comprises 184 residues: Large ribosomal subunit protein eL18 (184 aa).

The protein belongs to the eukaryotic ribosomal protein eL18 family.

It localises to the cytoplasm. The chain is Large ribosomal subunit protein eL18 (RPL18) from Theileria parva (East coast fever infection agent).